A 79-amino-acid chain; its full sequence is Pigment-dispersing hormone type 1 (79 aa).

An N-terminal signal peptide occupies residues 1–22 (MRSAVVVALLVMVAMSLQLTAA). Ala-76 is modified (alanine amide).

The protein belongs to the arthropod PDH family. As to expression, eyestalk.

Its subcellular location is the secreted. The pigment-dispersing hormone causes the migration of the distal retinal pigment into the proximal end of the pigment chromatophore cells and thus decreases the amount of light entering the retinulas. May also function as a neurotransmitter and/or neuromodulator. This chain is Pigment-dispersing hormone type 1 (PDH1), found in Penaeus vannamei (Whiteleg shrimp).